The chain runs to 441 residues: 3-phosphoshikimate 1-carboxyvinyltransferase (441 aa).

The interval 1-24 is disordered; the sequence is MSGTGQSDDPRELKAGGSLQGRVK. 3-phosphoshikimate contacts are provided by K29, S30, and R34. K29 provides a ligand contact to phosphoenolpyruvate. Residues G103 and R132 each contribute to the phosphoenolpyruvate site. The 3-phosphoshikimate site is built by S177, Q179, D328, and K355. Q179 provides a ligand contact to phosphoenolpyruvate. D328 functions as the Proton acceptor in the catalytic mechanism. Positions 359 and 401 each coordinate phosphoenolpyruvate.

Belongs to the EPSP synthase family. As to quaternary structure, monomer.

Its subcellular location is the cytoplasm. The catalysed reaction is 3-phosphoshikimate + phosphoenolpyruvate = 5-O-(1-carboxyvinyl)-3-phosphoshikimate + phosphate. The protein operates within metabolic intermediate biosynthesis; chorismate biosynthesis; chorismate from D-erythrose 4-phosphate and phosphoenolpyruvate: step 6/7. Functionally, catalyzes the transfer of the enolpyruvyl moiety of phosphoenolpyruvate (PEP) to the 5-hydroxyl of shikimate-3-phosphate (S3P) to produce enolpyruvyl shikimate-3-phosphate and inorganic phosphate. The protein is 3-phosphoshikimate 1-carboxyvinyltransferase of Synechococcus sp. (strain CC9605).